Consider the following 531-residue polypeptide: Efflux pump terG (531 aa).

Residues 1-11 (MSSSTLEGQET) are compositionally biased toward polar residues. The disordered stretch occupies residues 1–27 (MSSSTLEGQETASHHSKNSPSRHGDDG). 13 helical membrane passes run 86 to 106 (GKLS…ILIG), 117 to 137 (AIFV…GVSV), 145 to 165 (ILAR…ALAI), 179 to 199 (FAWF…FGPL), 207 to 227 (WIYW…IVAI), 249 to 269 (IDLL…FAWN), 280 to 300 (YVYV…YVEL), 319 to 339 (FVFG…FYVI), 351 to 371 (IQMA…ALIV), 380 to 400 (ASSI…LMAL), 402 to 422 (PVHS…TFAM), 447 to 467 (SVIM…AGTI), and 488 to 508 (TLWF…IFLL).

Belongs to the major facilitator superfamily.

It is found in the cell membrane. In terms of biological role, efflux pump that might be required for efficient secretion of terrein or other secondary metabolies produced by the terrein genne cluster. This Aspergillus terreus (strain NIH 2624 / FGSC A1156) protein is Efflux pump terG.